The following is a 403-amino-acid chain: Putative glutamate--cysteine ligase 2 (403 aa).

The disordered stretch occupies residues 370–403; that stretch reads ESAAQRRAPQAARRRIRASSEPLGPMSMWPERLH.

The protein belongs to the glutamate--cysteine ligase type 2 family. YbdK subfamily.

The enzyme catalyses L-cysteine + L-glutamate + ATP = gamma-L-glutamyl-L-cysteine + ADP + phosphate + H(+). Functionally, ATP-dependent carboxylate-amine ligase which exhibits weak glutamate--cysteine ligase activity. The polypeptide is Putative glutamate--cysteine ligase 2 (Bordetella avium (strain 197N)).